A 421-amino-acid polypeptide reads, in one-letter code: 3-hydroxy-3-methylglutaryl-coenzyme A reductase (421 aa).

Active-site charge relay system residues include glutamate 109, lysine 240, and aspartate 315. The Proton donor role is filled by histidine 410.

Belongs to the HMG-CoA reductase family.

The enzyme catalyses (R)-mevalonate + 2 NADP(+) + CoA = (3S)-3-hydroxy-3-methylglutaryl-CoA + 2 NADPH + 2 H(+). It functions in the pathway metabolic intermediate biosynthesis; (R)-mevalonate biosynthesis; (R)-mevalonate from acetyl-CoA: step 3/3. Converts HMG-CoA to mevalonate. The protein is 3-hydroxy-3-methylglutaryl-coenzyme A reductase (hmgA) of Aeropyrum pernix (strain ATCC 700893 / DSM 11879 / JCM 9820 / NBRC 100138 / K1).